The sequence spans 789 residues: Phenylalanine--tRNA ligase beta subunit (789 aa).

The 114-residue stretch at 38-151 (KKHLQSFVVV…NTYNVGESFF (114 aa)) folds into the tRNA-binding domain. In terms of domain architecture, B5 spans 398-474 (HNDILLNFSP…RLYGYDKILE (77 aa)). Residues aspartate 452, aspartate 458, glutamate 461, and glutamate 462 each contribute to the Mg(2+) site. One can recognise an FDX-ACB domain in the interval 694 to 787 (LRYQSVKRDF…ISKGFNGILR (94 aa)).

The protein belongs to the phenylalanyl-tRNA synthetase beta subunit family. Type 1 subfamily. Tetramer of two alpha and two beta subunits. The cofactor is Mg(2+).

It localises to the cytoplasm. The catalysed reaction is tRNA(Phe) + L-phenylalanine + ATP = L-phenylalanyl-tRNA(Phe) + AMP + diphosphate + H(+). This is Phenylalanine--tRNA ligase beta subunit from Ehrlichia ruminantium (strain Gardel).